The sequence spans 641 residues: Threonine--tRNA ligase (641 aa).

In terms of domain architecture, TGS spans 1–61; that stretch reads MIKINLLNHQ…TQDGDLEILA (61 aa). Positions 240-538 are catalytic; sequence DHKRLNKKLD…LIEENKGVFP (299 aa). C334, H385, and H515 together coordinate Zn(2+).

Belongs to the class-II aminoacyl-tRNA synthetase family. Homodimer. The cofactor is Zn(2+).

Its subcellular location is the cytoplasm. It carries out the reaction tRNA(Thr) + L-threonine + ATP = L-threonyl-tRNA(Thr) + AMP + diphosphate + H(+). In terms of biological role, catalyzes the attachment of threonine to tRNA(Thr) in a two-step reaction: L-threonine is first activated by ATP to form Thr-AMP and then transferred to the acceptor end of tRNA(Thr). Also edits incorrectly charged L-seryl-tRNA(Thr). The polypeptide is Threonine--tRNA ligase (Phytoplasma australiense).